We begin with the raw amino-acid sequence, 88 residues long: Large ribosomal subunit protein bL27 (88 aa).

The segment at 1–21 (MAHKKGTGSTRNGRDSNAKRL) is disordered.

This sequence belongs to the bacterial ribosomal protein bL27 family.

This Parasynechococcus marenigrum (strain WH8102) protein is Large ribosomal subunit protein bL27.